Reading from the N-terminus, the 336-residue chain is C4-dicarboxylate-binding periplasmic protein DctP (336 aa).

The first 31 residues, 1–31 (MTRLNTCTFIKQIVKMTSIAALLGASLNSWA), serve as a signal peptide directing secretion. Residues K48, K101, R176, N216, N220, and Y243 each coordinate (S)-malate. Positions 48, 101, 176, 216, 220, and 243 each coordinate succinate.

This sequence belongs to the bacterial solute-binding protein 7 family. The complex comprises the extracytoplasmic solute receptor protein DctP, and the two transmembrane proteins DctQ and DctM.

It is found in the periplasm. Part of the tripartite ATP-independent periplasmic (TRAP) transport system DctPQM involved in C4-dicarboxylates uptake. Required for the utilization of succinate, fumarate, L-malate and alpha-ketoglutarate. Binds succinate and malate. This chain is C4-dicarboxylate-binding periplasmic protein DctP, found in Shewanella loihica (strain ATCC BAA-1088 / PV-4).